A 130-amino-acid polypeptide reads, in one-letter code: Cytochrome c oxidase subunit 13, mitochondrial (130 aa).

A mitochondrion-targeting transit peptide spans methionine 1–tyrosine 31. At serine 32–threonine 61 the chain is on the mitochondrial matrix side. The helical transmembrane segment at tyrosine 62–tyrosine 80 threads the bilayer. At cysteine 81–glutamate 130 the chain is on the mitochondrial intermembrane side.

It belongs to the cytochrome c oxidase subunit 6A family. As to quaternary structure, component of the cytochrome c oxidase (complex IV, CIV), a multisubunit enzyme composed of a catalytic core of 3 subunits and several supernumerary subunits. The complex exists as a monomer or a dimer and forms supercomplexes (SCs) in the inner mitochondrial membrane with ubiquinol-cytochrome c oxidoreductase (cytochrome b-c1 complex, complex III, CIII).

The protein resides in the mitochondrion inner membrane. The protein operates within energy metabolism; oxidative phosphorylation. Its function is as follows. Component of the cytochrome c oxidase, the last enzyme in the mitochondrial electron transport chain which drives oxidative phosphorylation. The respiratory chain contains 3 multisubunit complexes succinate dehydrogenase (complex II, CII), ubiquinol-cytochrome c oxidoreductase (cytochrome b-c1 complex, complex III, CIII) and cytochrome c oxidase (complex IV, CIV), that cooperate to transfer electrons derived from NADH and succinate to molecular oxygen, creating an electrochemical gradient over the inner membrane that drives transmembrane transport and the ATP synthase. Cytochrome c oxidase is the component of the respiratory chain that catalyzes the reduction of oxygen to water. Electrons originating from reduced cytochrome c in the intermembrane space (IMS) are transferred via the dinuclear copper A center (CU(A)) of subunit 2 and heme A of subunit 1 to the active site in subunit 1, a binuclear center (BNC) formed by heme A3 and copper B (CU(B)). The BNC reduces molecular oxygen to 2 water molecules unsing 4 electrons from cytochrome c in the IMS and 4 protons from the mitochondrial matrix. The sequence is that of Cytochrome c oxidase subunit 13, mitochondrial (cox13) from Schizosaccharomyces pombe (strain 972 / ATCC 24843) (Fission yeast).